A 235-amino-acid polypeptide reads, in one-letter code: Large ribosomal subunit protein uL3 (235 aa).

The tract at residues 150 to 189 is disordered; it reads AGGPASHGSGHHRHAGSTGMRSTPGRGLPGGKKAGQMGNE.

Belongs to the universal ribosomal protein uL3 family. In terms of assembly, part of the 50S ribosomal subunit. Forms a cluster with proteins L14 and L19.

One of the primary rRNA binding proteins, it binds directly near the 3'-end of the 23S rRNA, where it nucleates assembly of the 50S subunit. The protein is Large ribosomal subunit protein uL3 of Protochlamydia amoebophila (strain UWE25).